A 507-amino-acid chain; its full sequence is 3-oxosteroid 1-dehydrogenase (507 aa).

9 to 38 (DLLVVGSGGGALTGAYTAAAQGLTTIVLEK) provides a ligand contact to FAD. Residues 299–385 (GLVVDSPGSV…LPRPDYRPER (87 aa)) form a disordered region.

The protein belongs to the FAD-dependent oxidoreductase 2 family. 3-oxosteroid dehydrogenase subfamily. FAD is required as a cofactor.

The protein resides in the cell membrane. The catalysed reaction is a 3-oxosteroid + A = a 3-oxo-Delta(1)-steroid + AH2. It functions in the pathway lipid metabolism; steroid degradation. In terms of biological role, catalyzes the elimination of the C-1 and C-2 hydrogen atoms of the A-ring from the polycyclic ring structure of 3-ketosteroids. The sequence is that of 3-oxosteroid 1-dehydrogenase from Rhodococcus opacus (Nocardia opaca).